The primary structure comprises 100 residues: Small ribosomal subunit protein uS14c (100 aa).

The protein belongs to the universal ribosomal protein uS14 family. As to quaternary structure, part of the 30S ribosomal subunit.

The protein resides in the plastid. Its subcellular location is the chloroplast. In terms of biological role, binds 16S rRNA, required for the assembly of 30S particles. The chain is Small ribosomal subunit protein uS14c from Aethionema cordifolium (Lebanon stonecress).